The primary structure comprises 97 residues: Large ribosomal subunit protein bL27 (97 aa).

A propeptide spanning residues 1–12 (MLKMTLNNLQLF) is cleaved from the precursor. The segment at 13–37 (AHKKGGGSTSNGRDSQAKRLGAKAA) is disordered.

This sequence belongs to the bacterial ribosomal protein bL27 family. Post-translationally, the N-terminus is cleaved by ribosomal processing cysteine protease Prp.

The sequence is that of Large ribosomal subunit protein bL27 from Streptococcus pneumoniae serotype 2 (strain D39 / NCTC 7466).